Here is a 738-residue protein sequence, read N- to C-terminus: MTSPEGAQNKEIDCLSPEAQRLAEARLAAKRAARAEAREIRMKELERQQKEVEERPDKDFAEKGSRNMPSLSAATLASLGGTSSRRGSGDTSISMDTEASIREIKDSLAEVEEKYKKAMVSNAQLDNEKTNFMYQVDTLKDMLLELEEQLAESQRQYEEKNKEFEREKHAHSILQFQFAEVKEALRQREEMLEKHGIILNSEIATNGETSDTVNDVGYQAPTKITKEELNALKAAGEGTLGKAKEVEVKKEIVEKVGQRETLQDSEQEQPKLNTGKDCVDRGVLHPGEKAENQRPVEDSALSPGPLAGAKCEQEVQSQDQENTSILKSPEQIESHEVTNKSDSRDSNSPEPSSCRGGLDSEVSGPTALGIKNQSENSMDSQGKENQEDLGKGSFEPRPDHVLGQTPEIDKVSCTDSRGTGGNHLEDVVQAGDTIVEDQVGTMASAEQSKSMENHIGRSLNDGLGQSSERELAHEAAELEEALTQSSQAGGENTVTEAEDAAVRDEKPLQADVQATPAAPTVQSGHQDTTGPGSTDTKHTSPHAKERNKAKSEQQAEALDSPQKKTKNKKKKNKKKKAAAPMETCKDANEESSCQDPDVGDGEEEERVQATDKKWAAETPELKEDPQSRPSGKQNDAEEDSGPAEGPTDVLDQNSLQCADGDISPVGRKGPQRDASQIGGEEGLVPSQHPGQADEKGIEGHSVDNSDLSGELGGFNSESGEQAREEVGNSKSKEDCTMS.

T2 carries the N-acetylthreonine modification. At S16 the chain carries Phosphoserine. Residues 40-65 (IRMKELERQQKEVEERPDKDFAEKGS) show a composition bias toward basic and acidic residues. The segment at 40–98 (IRMKELERQQKEVEERPDKDFAEKGSRNMPSLSAATLASLGGTSSRRGSGDTSISMDTE) is disordered. Residues 78-94 (SLGGTSSRRGSGDTSIS) are compositionally biased toward low complexity. S83, S84, S88, and S92 each carry phosphoserine. Positions 94 to 194 (SMDTEASIRE…LRQREEMLEK (101 aa)) form a coiled coil. K249 participates in a covalent cross-link: Glycyl lysine isopeptide (Lys-Gly) (interchain with G-Cter in SUMO1). Basic and acidic residues-rich tracts occupy residues 253-262 (VEKVGQRETL) and 277-297 (DCVD…RPVE). The tract at residues 253–738 (VEKVGQRETL…SKSKEDCTMS (486 aa)) is disordered. S302 is subject to Phosphoserine. Positions 314 to 326 (EVQSQDQENTSIL) are enriched in polar residues. Residues 330–347 (EQIESHEVTNKSDSRDSN) show a composition bias toward basic and acidic residues. 2 positions are modified to phosphoserine: S346 and S348. The span at 371 to 380 (KNQSENSMDS) shows a compositional bias: polar residues. 2 stretches are compositionally biased toward basic and acidic residues: residues 381-400 (QGKE…RPDH) and 467-476 (SERELAHEAA). Positions 479–580 (EEALTQSSQA…KNKKKKAAAP (102 aa)) are DNA-binding. Polar residues-rich tracts occupy residues 483–495 (TQSS…NTVT) and 520–534 (TVQS…PGST). Residues 535-553 (DTKHTSPHAKERNKAKSEQ) show a composition bias toward basic and acidic residues. S551 and S560 each carry phosphoserine. Basic residues predominate over residues 563–577 (KKTKNKKKKNKKKKA). Basic and acidic residues predominate over residues 606–626 (RVQATDKKWAAETPELKEDPQ). 2 positions are modified to phosphoserine: S675 and S701. Basic and acidic residues-rich tracts occupy residues 691-703 (QADE…HSVD) and 720-738 (EQAR…CTMS).

It belongs to the LRRFIP family. Homodimer. May also form higher oligomers. Interacts with FLII. Interacts with MYD88. Competes with FLII for MyD88-binding, even in the absence of LPS.

It is found in the nucleus. The protein resides in the cytoplasm. In terms of biological role, transcriptional repressor which preferentially binds to the GC-rich consensus sequence (5'-AGCCCCCGGCG-3') and may regulate expression of TNF, EGFR and PDGFA. May control smooth muscle cells proliferation following artery injury through PDGFA repression. May also bind double-stranded RNA. Positively regulates Toll-like receptor (TLR) signaling in response to agonist probably by competing with the negative FLII regulator for MYD88-binding. The polypeptide is Leucine-rich repeat flightless-interacting protein 1 (Lrrfip1) (Rattus norvegicus (Rat)).